Consider the following 199-residue polypeptide: Transgelin-2 (199 aa).

The residue at position 2 (alanine 2) is an N-acetylalanine. The residue at position 11 (serine 11) is a Phosphoserine. N6-acetyllysine is present on residues lysine 17 and lysine 20. Residues 24–136 (ADLEQILIQW…RTLMNLGGLA (113 aa)) form the Calponin-homology (CH) domain. The residue at position 163 (serine 163) is a Phosphoserine. A Glycyl lysine isopeptide (Lys-Gly) (interchain with G-Cter in SUMO2) cross-link involves residue lysine 171. The stretch at 174 to 199 (IGLQMGTNRGASQAGMTGYGMPRQIL) is one Calponin-like repeat. Threonine 180 is modified (phosphothreonine). Omega-N-methylarginine occurs at positions 182 and 196.

This sequence belongs to the calponin family.

This is Transgelin-2 (TAGLN2) from Bos taurus (Bovine).